The sequence spans 279 residues: Estrogen receptor beta (279 aa).

An NR LBD domain is found at 27 to 261 (SPEQLVLTLL…DLLLEMLNAH (235 aa)).

It belongs to the nuclear hormone receptor family. NR3 subfamily. As to quaternary structure, binds DNA as a homodimer. Can form a heterodimer with ESR1. Interacts with NCOA1, NCOA3, NCOA5 and NCOA6 coactivators, leading to a strong increase of transcription of target genes. Interacts with UBE1C and AKAP13. Interacts with DNTTIP2. Interacts with CCDC62 in the presence of estradiol/E2; this interaction seems to enhance the transcription of target genes. Interacts with DNAAF4. Interacts with PRMT2. Interacts with CCAR2 (via N-terminus) in a ligand-independent manner. Interacts with RBM39, in the presence of estradiol (E2). Interacts with STUB1/CHIP.

Its subcellular location is the nucleus. Nuclear hormone receptor. Binds estrogens with an affinity similar to that of ESR1/ER-alpha, and activates expression of reporter genes containing estrogen response elements (ERE) in an estrogen-dependent manner. The sequence is that of Estrogen receptor beta (ESR2) from Macaca mulatta (Rhesus macaque).